The primary structure comprises 205 residues: Ribosomal RNA small subunit methyltransferase G (205 aa).

Residues Gly70, Leu75, 124 to 125 (IE), and Arg138 contribute to the S-adenosyl-L-methionine site.

It belongs to the methyltransferase superfamily. RNA methyltransferase RsmG family.

The protein localises to the cytoplasm. It catalyses the reaction guanosine(527) in 16S rRNA + S-adenosyl-L-methionine = N(7)-methylguanosine(527) in 16S rRNA + S-adenosyl-L-homocysteine. In terms of biological role, specifically methylates the N7 position of guanine in position 527 of 16S rRNA. The protein is Ribosomal RNA small subunit methyltransferase G of Ruegeria sp. (strain TM1040) (Silicibacter sp.).